We begin with the raw amino-acid sequence, 248 residues long: Probable capsular polysaccharide biosynthesis protein YwqC (248 aa).

A run of 2 helical transmembrane segments spans residues 18–38 (ILLI…ISFF) and 174–194 (LLNI…LAFL).

Belongs to the CpsC/CapA family. In terms of processing, not phosphorylated in vitro by YwqD.

The protein resides in the cell membrane. It participates in capsule biogenesis; capsule polysaccharide biosynthesis. Its function is as follows. Required for YwqD kinase activity. May bring YwqD and its substrates into contact. Probably involved in the regulation of capsular polysaccharide biosynthesis. The chain is Probable capsular polysaccharide biosynthesis protein YwqC (ywqC) from Bacillus subtilis (strain 168).